The sequence spans 625 residues: tRNA (uracil-5-)-methyltransferase homolog A (625 aa).

Disordered regions lie at residues 1–37 (MSENLDNEGPKPMESCGQESSSALSCPTVSVPPAAPA) and 145–165 (RPKADPMARRRRQEGESEPPV). Low complexity predominate over residues 27 to 37 (PTVSVPPAAPA). The 74-residue stretch at 73-146 (FKLELQNVPR…RPLSVRLARP (74 aa)) folds into the RRM domain. The stretch at 180 to 209 (YAEQLERKQLECEQVLQKLAKEIGSTNRAL) forms a coiled coil. Position 378 is a phosphoserine (Ser-378). S-adenosyl-L-methionine-binding residues include Gln-411, Glu-461, and Asp-510. Cys-538 (nucleophile) is an active-site residue. The Proton acceptor role is filled by Glu-581. Residues 594–625 (GTGVLGPHSPPAQPTPGPPDNTLQETGTFPSS) form a disordered region. Over residues 601-612 (HSPPAQPTPGPP) the composition is skewed to pro residues. Ser-602 carries the phosphoserine modification. Polar residues predominate over residues 614 to 625 (NTLQETGTFPSS).

It belongs to the class I-like SAM-binding methyltransferase superfamily. RNA M5U methyltransferase family.

Its subcellular location is the cytoplasm. It is found in the cytosol. The enzyme catalyses uridine(54) in tRNA + S-adenosyl-L-methionine = 5-methyluridine(54) in tRNA + S-adenosyl-L-homocysteine + H(+). It catalyses the reaction a uridine in mRNA + S-adenosyl-L-methionine = a 5-methyluridine in mRNA + S-adenosyl-L-homocysteine + H(+). S-adenosyl-L-methionine-dependent methyltransferase that catalyzes the formation of 5-methyl-uridine in tRNAs and some mRNAs. Mainly catalyzes the methylation of uridine at position 54 (m5U54) in cytosolic tRNAs. Also able to mediate the formation of 5-methyl-uridine in some mRNAs. The sequence is that of tRNA (uracil-5-)-methyltransferase homolog A from Homo sapiens (Human).